The sequence spans 582 residues: TRAF-type zinc finger domain-containing protein 1 (582 aa).

Alanine 2 carries the N-acetylalanine modification. The TRAF-type zinc-finger motif lies at 27–103 (IHEIHCQRNI…DLELSILKLK (77 aa)). Phosphoserine is present on serine 191. A disordered region spans residues 217-236 (EQERQERNRGQQPPKEGGEE). 8 positions are modified to phosphoserine: serine 278, serine 320, serine 326, serine 327, serine 409, serine 415, serine 430, and serine 470. Positions 401–582 (TEGIPRLDSQ…AGDAEEEEEE (182 aa)) are disordered. 2 stretches are compositionally biased toward polar residues: residues 454 to 471 (PINN…STSG) and 486 to 495 (LSNSDSQDIQ).

In terms of assembly, interacts with MAVS, TICAM1, TRAF1, TRAF2, TRAF3. Interacts with TRAF6.

Its function is as follows. Negative feedback regulator that controls excessive innate immune responses. Regulates both Toll-like receptor 4 (TLR4) and DDX58/RIG1-like helicases (RLH) pathways. May inhibit the LTR pathway by direct interaction with TRAF6 and attenuation of NF-kappa-B activation. May negatively regulate the RLH pathway downstream from MAVS and upstream of NF-kappa-B and IRF3. The sequence is that of TRAF-type zinc finger domain-containing protein 1 (TRAFD1) from Homo sapiens (Human).